The sequence spans 307 residues: Coproporphyrin III ferrochelatase (307 aa).

Fe-coproporphyrin III contacts are provided by residues Y12, R29, 45–46, S53, and Y124; that span reads RY. H181 and E263 together coordinate Fe(2+).

The protein belongs to the ferrochelatase family.

The protein localises to the cytoplasm. The catalysed reaction is Fe-coproporphyrin III + 2 H(+) = coproporphyrin III + Fe(2+). Its pathway is porphyrin-containing compound metabolism; protoheme biosynthesis. Involved in coproporphyrin-dependent heme b biosynthesis. Catalyzes the insertion of ferrous iron into coproporphyrin III to form Fe-coproporphyrin III. The protein is Coproporphyrin III ferrochelatase of Staphylococcus aureus (strain MRSA252).